We begin with the raw amino-acid sequence, 330 residues long: 4,5-dihydroxyphthalate decarboxylase (330 aa).

This sequence to P.putida DHP decarboxylase.

It carries out the reaction 4,5-dihydroxyphthalate + H(+) = 3,4-dihydroxybenzoate + CO2. It participates in xenobiotic degradation; phthalate degradation; 3,4-dihydroxybenzoate from phthalate: step 3/3. The sequence is that of 4,5-dihydroxyphthalate decarboxylase (phtD) from Comamonas testosteroni (Pseudomonas testosteroni).